Here is a 334-residue protein sequence, read N- to C-terminus: Cytosolic Fe-S cluster assembly factor NBP35 (334 aa).

Residues C33, C47, C50, and C56 each coordinate [4Fe-4S] cluster. 86 to 93 (GKGGVGKS) contributes to the ATP binding site. C259 and C262 together coordinate [4Fe-4S] cluster.

This sequence belongs to the Mrp/NBP35 ATP-binding proteins family. NUBP1/NBP35 subfamily. In terms of assembly, heterotetramer of 2 NBP35 and 2 CFD1 chains. [4Fe-4S] cluster serves as cofactor.

It localises to the cytoplasm. Its subcellular location is the nucleus. Functionally, component of the cytosolic iron-sulfur (Fe/S) protein assembly (CIA) machinery. Required for maturation of extramitochondrial Fe-S proteins. The NBP35-CFD1 heterotetramer forms a Fe-S scaffold complex, mediating the de novo assembly of an Fe-S cluster and its transfer to target apoproteins. Required for biogenesis and export of both ribosomal subunits, which may reflect a role in assembly of the Fe/S clusters in RLI1, a protein which performs rRNA processing and ribosome export. This is Cytosolic Fe-S cluster assembly factor NBP35 from Candida glabrata (strain ATCC 2001 / BCRC 20586 / JCM 3761 / NBRC 0622 / NRRL Y-65 / CBS 138) (Yeast).